Here is a 217-residue protein sequence, read N- to C-terminus: uncharacterized protein (217 aa).

Residues Val-26–Ala-48 traverse the membrane as a helical segment.

It is found in the membrane. This is an uncharacterized protein from Archaeoglobus fulgidus (strain ATCC 49558 / DSM 4304 / JCM 9628 / NBRC 100126 / VC-16).